A 242-amino-acid chain; its full sequence is Probable transcriptional regulatory protein PXO_01555 (242 aa).

This sequence belongs to the TACO1 family.

The protein localises to the cytoplasm. This chain is Probable transcriptional regulatory protein PXO_01555, found in Xanthomonas oryzae pv. oryzae (strain PXO99A).